We begin with the raw amino-acid sequence, 348 residues long: Killer cell immunoglobulin-like receptor 2DL2 (348 aa).

Residues 1–21 (MSLMVVSMACVGFFLLQGAWP) form the signal peptide. The Extracellular segment spans residues 22-245 (HEGVHRKPSL…SKTGNPRHLH (224 aa)). 2 Ig-like C2-type domains span residues 42–107 (EETV…VTHS) and 142–205 (GESV…FRDS). 2 disulfide bridges follow: Cys-49–Cys-100 and Cys-149–Cys-198. 3 N-linked (GlcNAc...) asparagine glycosylation sites follow: Asn-84, Asn-178, and Asn-211. A helical transmembrane segment spans residues 246–264 (ILIGTSVVIILFILLFFLL). The Cytoplasmic portion of the chain corresponds to 265–348 (HRWCSNKKNA…ESRSKVVSCP (84 aa)).

This sequence belongs to the immunoglobulin superfamily.

It localises to the cell membrane. In terms of biological role, receptor on natural killer (NK) cells for HLA-Cw1, 3, 7, and 8 allotypes. Inhibits the activity of NK cells thus preventing cell lysis. This Homo sapiens (Human) protein is Killer cell immunoglobulin-like receptor 2DL2.